A 341-amino-acid polypeptide reads, in one-letter code: KRR1 small subunit processome component homolog (341 aa).

The 69-residue stretch at 126–194 (DIIKIGNLVH…VRDIVLETMN (69 aa)) folds into the KH domain. Residues 230-244 (KNKNISKRKQPKSRK) show a composition bias toward basic residues. The disordered stretch occupies residues 230–327 (KNKNISKRKQ…RPSEASKVDV (98 aa)). Residues 271–341 (FLNKEQKQAK…AKLLKANKQK (71 aa)) are a coiled coil. Composition is skewed to basic and acidic residues over residues 272 to 303 (LNKEQKQAKRQQERVAKQAEAAKKQDERRNKD) and 313 to 327 (EQNRKRPSEASKVDV).

It belongs to the KRR1 family. Monomer. Component of the ribosomal small subunit (SSU) processome.

Its subcellular location is the nucleus. It is found in the nucleolus. Functionally, required for 40S ribosome biogenesis. Involved in nucleolar processing of pre-18S ribosomal RNA and ribosome assembly. Binds to RNA. Required for female germline development, cell viability during eye development and for survival of dividing cells and epithelial cells during early wing disk development. This chain is KRR1 small subunit processome component homolog, found in Drosophila grimshawi (Hawaiian fruit fly).